Here is a 157-residue protein sequence, read N- to C-terminus: Phosphopantetheine adenylyltransferase (157 aa).

Residue S9 coordinates substrate. ATP-binding positions include 9 to 10 and H17; that span reads SF. Residues K41, L74, and K88 each contribute to the substrate site. Residues 89-91, E99, and 123-129 contribute to the ATP site; these read GLR and YTHVSSS.

Belongs to the bacterial CoaD family. In terms of assembly, homohexamer. Requires Mg(2+) as cofactor.

The protein resides in the cytoplasm. It catalyses the reaction (R)-4'-phosphopantetheine + ATP + H(+) = 3'-dephospho-CoA + diphosphate. Its pathway is cofactor biosynthesis; coenzyme A biosynthesis; CoA from (R)-pantothenate: step 4/5. In terms of biological role, reversibly transfers an adenylyl group from ATP to 4'-phosphopantetheine, yielding dephospho-CoA (dPCoA) and pyrophosphate. The protein is Phosphopantetheine adenylyltransferase of Micrococcus luteus (strain ATCC 4698 / DSM 20030 / JCM 1464 / CCM 169 / CCUG 5858 / IAM 1056 / NBRC 3333 / NCIMB 9278 / NCTC 2665 / VKM Ac-2230) (Micrococcus lysodeikticus).